Reading from the N-terminus, the 248-residue chain is Inner membrane protein pE248R (248 aa).

G2 carries N-myristoyl glycine; by host lipidation. The Cytoplasmic portion of the chain corresponds to 2–199 (GGSTSKNSFK…ADAISAVFKN (198 aa)). The chain crosses the membrane as a helical span at residues 200 to 220 (IMVAAVVIVLIIVGFIAVFYF). Residues 221 to 248 (LHSRHRHEEEEEAEPLISNKVLKNAAVS) lie on the Extracellular side of the membrane.

Belongs to the asfivirus E248R family. In terms of assembly, interacts with A151R.

The protein resides in the host membrane. The protein localises to the virion membrane. Its function is as follows. Essential for viral fusion with host endosomal membrane and core release. The sequence is that of Inner membrane protein pE248R from Ornithodoros (relapsing fever ticks).